We begin with the raw amino-acid sequence, 289 residues long: NAD kinase (289 aa).

The active-site Proton acceptor is the Asp68. Residues 68–69, Lys73, 142–143, Arg153, Asp172, 183–188, and Gln243 each bind NAD(+); these read DG, ND, and TAYSLS.

The protein belongs to the NAD kinase family. The cofactor is a divalent metal cation.

It localises to the cytoplasm. It catalyses the reaction NAD(+) + ATP = ADP + NADP(+) + H(+). Its function is as follows. Involved in the regulation of the intracellular balance of NAD and NADP, and is a key enzyme in the biosynthesis of NADP. Catalyzes specifically the phosphorylation on 2'-hydroxyl of the adenosine moiety of NAD to yield NADP. The polypeptide is NAD kinase (Acetivibrio thermocellus (strain ATCC 27405 / DSM 1237 / JCM 9322 / NBRC 103400 / NCIMB 10682 / NRRL B-4536 / VPI 7372) (Clostridium thermocellum)).